The chain runs to 602 residues: Elongation factor 4 (602 aa).

Residues 7–188 enclose the tr-type G domain; it reads ENIRNFSIIA…SIIRLVPPPK (182 aa). GTP is bound by residues 19 to 24 and 135 to 138; these read DHGKST and NKID.

Belongs to the TRAFAC class translation factor GTPase superfamily. Classic translation factor GTPase family. LepA subfamily.

It localises to the cell inner membrane. It catalyses the reaction GTP + H2O = GDP + phosphate + H(+). Its function is as follows. Required for accurate and efficient protein synthesis under certain stress conditions. May act as a fidelity factor of the translation reaction, by catalyzing a one-codon backward translocation of tRNAs on improperly translocated ribosomes. Back-translocation proceeds from a post-translocation (POST) complex to a pre-translocation (PRE) complex, thus giving elongation factor G a second chance to translocate the tRNAs correctly. Binds to ribosomes in a GTP-dependent manner. This Chlamydia muridarum (strain MoPn / Nigg) protein is Elongation factor 4.